A 148-amino-acid polypeptide reads, in one-letter code: uncharacterized protein (148 aa).

A helical membrane pass occupies residues 7 to 29 (MLILMSLVKIVLTCLPTGVIEWL).

Its subcellular location is the membrane. This is an uncharacterized protein from Bacillus subtilis (strain 168).